A 1534-amino-acid polypeptide reads, in one-letter code: Alpha-2-macroglobulin homolog (1534 aa).

Positions 1-38 are cleaved as a signal peptide; it reads MDTQRFQSQFHWHLSFKFSGAIAACLSLSLVGTGLANA.

This sequence belongs to the protease inhibitor I39 (alpha-2-macroglobulin) family. Bacterial alpha-2-macroglobulin subfamily.

This Escherichia coli O157:H7 protein is Alpha-2-macroglobulin homolog (yfaS).